The chain runs to 304 residues: Protein translocase subunit SecF (304 aa).

Transmembrane regions (helical) follow at residues 20–40 (AKLF…LIFT), 143–163 (AMMA…IRFE), 164–184 (LIFA…TLGF), 195–215 (TVVA…IVVF), 244–266 (LSRT…IFGG), and 276–298 (LVIG…VYLI).

Belongs to the SecD/SecF family. SecF subfamily. In terms of assembly, forms a complex with SecD. Part of the essential Sec protein translocation apparatus which comprises SecA, SecYEG and auxiliary proteins SecDF. Other proteins may also be involved.

It localises to the cell inner membrane. Part of the Sec protein translocase complex. Interacts with the SecYEG preprotein conducting channel. SecDF uses the proton motive force (PMF) to complete protein translocation after the ATP-dependent function of SecA. This chain is Protein translocase subunit SecF, found in Calditerrivibrio nitroreducens (strain DSM 19672 / NBRC 101217 / Yu37-1).